A 57-amino-acid chain; its full sequence is Sec-independent protein translocase protein TatA (57 aa).

Residues 1-21 (MGISVWQLLIILLIVVMLFGT) traverse the membrane as a helical segment. A disordered region spans residues 37–57 (GFRKSVSDGETTTQAEASSRS). Polar residues predominate over residues 44 to 57 (DGETTTQAEASSRS).

The protein belongs to the TatA/E family. As to quaternary structure, the Tat system comprises two distinct complexes: a TatABC complex, containing multiple copies of TatA, TatB and TatC subunits, and a separate TatA complex, containing only TatA subunits. Substrates initially bind to the TatABC complex, which probably triggers association of the separate TatA complex to form the active translocon.

It localises to the cell inner membrane. Functionally, part of the twin-arginine translocation (Tat) system that transports large folded proteins containing a characteristic twin-arginine motif in their signal peptide across membranes. TatA could form the protein-conducting channel of the Tat system. The chain is Sec-independent protein translocase protein TatA from Stutzerimonas stutzeri (Pseudomonas stutzeri).